The chain runs to 313 residues: T-box protein 37 (313 aa).

The T-box DNA-binding region spans 19 to 195; the sequence is IWEKFYPKTE…HNKFASGFRS (177 aa). Residues 193–228 are disordered; it reads FRSNGKRRLSSESENSENSPPKRSASAISSLTPPAI.

The protein localises to the nucleus. In terms of biological role, transcription factor. Required for mesodermal induction, acting redundantly with transcription factor tbx-38. Together with tbx-38, acts by inducing cell fates in the AB lineage, thereby playing a role in development of the anterior pharynx. The protein is T-box protein 37 (tbx-37) of Caenorhabditis elegans.